Here is a 405-residue protein sequence, read N- to C-terminus: POC1 centriolar protein homolog A (405 aa).

WD repeat units follow at residues 17–56 (GHRD…RAYR), 59–98 (GHKD…ESTV), 101–140 (AHTA…FLFS), 143–182 (QHIN…CIHS), 185–224 (EHGG…LLQH), 227–266 (LHSA…LLYT), and 269–308 (GHQG…VDYG). The interval 313-352 (RRPPPLTSSSGTLPKMDLPVPPGRDRSLESVQGEPQESIS) is disordered. Polar residues predominate over residues 341–352 (ESVQGEPQESIS). The stretch at 367-395 (QLDILTQTVSILEQRLTLTEDRLKQCLEN) forms a coiled coil.

The protein belongs to the WD repeat POC1 family. As to quaternary structure, interacts with POC1B. Widely expressed in embryonic and adult tissues.

The protein localises to the cytoplasm. It localises to the cytoskeleton. Its subcellular location is the microtubule organizing center. It is found in the centrosome. The protein resides in the centriole. The protein localises to the cilium basal body. It localises to the spindle pole. Its function is as follows. Plays an important role in centriole assembly and/or stability and ciliogenesis. Involved in early steps of centriole duplication, as well as in the later steps of centriole length control. Acts in concert with POC1B to ensure centriole integrity and proper mitotic spindle formation. This chain is POC1 centriolar protein homolog A (Poc1a), found in Mus musculus (Mouse).